A 91-amino-acid chain; its full sequence is Small ribosomal subunit protein uS15c (91 aa).

It belongs to the universal ribosomal protein uS15 family. Part of the 30S ribosomal subunit.

The protein localises to the plastid. Its subcellular location is the chloroplast. This is Small ribosomal subunit protein uS15c (rps15) from Eucalyptus globulus subsp. globulus (Tasmanian blue gum).